The primary structure comprises 80 residues: Large ribosomal subunit protein uL24 (80 aa).

The tract at residues 53–80 (HMKPTQSHPQGSIIEREFPIHASNVKKS) is disordered.

The protein belongs to the universal ribosomal protein uL24 family. Part of the 50S ribosomal subunit.

One of two assembly initiator proteins, it binds directly to the 5'-end of the 23S rRNA, where it nucleates assembly of the 50S subunit. In terms of biological role, one of the proteins that surrounds the polypeptide exit tunnel on the outside of the subunit. In Chlorobium limicola (strain DSM 245 / NBRC 103803 / 6330), this protein is Large ribosomal subunit protein uL24.